The chain runs to 620 residues: UvrABC system protein C (620 aa).

The region spanning 13-92 (DKPGVYIMKN…IKKYSPRYNI (80 aa)) is the GIY-YIG domain. The 36-residue stretch at 204-239 (TSIIKKLKLEMEKAAEELEFEKAAKIRDRILAIELI) folds into the UVR domain.

Belongs to the UvrC family. As to quaternary structure, interacts with UvrB in an incision complex.

The protein resides in the cytoplasm. In terms of biological role, the UvrABC repair system catalyzes the recognition and processing of DNA lesions. UvrC both incises the 5' and 3' sides of the lesion. The N-terminal half is responsible for the 3' incision and the C-terminal half is responsible for the 5' incision. This chain is UvrABC system protein C, found in Clostridium perfringens (strain ATCC 13124 / DSM 756 / JCM 1290 / NCIMB 6125 / NCTC 8237 / Type A).